A 534-amino-acid polypeptide reads, in one-letter code: NAD(P)H-quinone oxidoreductase chain 4 (534 aa).

14 consecutive transmembrane segments (helical) span residues 12 to 32 (FPWL…IPFF), 44 to 64 (FALS…INGF), 96 to 116 (MPLI…AWPV), 120 to 140 (PKLF…VFAV), 144 to 164 (LLFF…LAIW), 176 to 196 (FIIY…AMGF), 220 to 240 (ILCY…VPLH), 251 to 271 (TAPV…YALL), 285 to 305 (FAPL…LTSF), 314 to 334 (IAYS…SFSS), 340 to 360 (AMLQ…LVGA), 384 to 404 (FALW…SGFV), 425 to 445 (VVMA…LLSM), and 472 to 492 (VYII…PRLV).

Belongs to the complex I subunit 4 family.

It localises to the cellular thylakoid membrane. The catalysed reaction is a plastoquinone + NADH + (n+1) H(+)(in) = a plastoquinol + NAD(+) + n H(+)(out). The enzyme catalyses a plastoquinone + NADPH + (n+1) H(+)(in) = a plastoquinol + NADP(+) + n H(+)(out). NDH-1 shuttles electrons from NAD(P)H, via FMN and iron-sulfur (Fe-S) centers, to quinones in the respiratory chain. The immediate electron acceptor for the enzyme in this species is believed to be plastoquinone. Couples the redox reaction to proton translocation (for every two electrons transferred, four hydrogen ions are translocated across the cytoplasmic membrane), and thus conserves the redox energy in a proton gradient. This chain is NAD(P)H-quinone oxidoreductase chain 4, found in Prochlorococcus marinus (strain AS9601).